A 250-amino-acid polypeptide reads, in one-letter code: PTB-containing, cubilin and LRP1-interacting protein (250 aa).

One can recognise a PID domain in the interval 93–250; it reads VTYLGKVSTT…VSQELESDDG (158 aa). Residues 229 to 250 form a disordered region; it reads DGRIHSNSSSEEVSQELESDDG. Phosphoserine occurs at positions 236 and 247. Positions 241 to 250 are enriched in acidic residues; the sequence is VSQELESDDG.

In terms of assembly, found in a complex with PID1/PCLI1, LRP1 and CUBNI. Interacts with LRP1 and CUBN. Expressed in subcutaneous fat, heart, skeletal muscle, brain, colon, thymus, spleen, kidney, liver, small intestine, placenta, lung and peripheral blood leukocyte.

The protein localises to the cytoplasm. Functionally, increases proliferation of preadipocytes without affecting adipocytic differentiation. The sequence is that of PTB-containing, cubilin and LRP1-interacting protein (PID1) from Homo sapiens (Human).